Reading from the N-terminus, the 202-residue chain is Putative 3-methyladenine DNA glycosylase (202 aa).

It belongs to the DNA glycosylase MPG family.

This chain is Putative 3-methyladenine DNA glycosylase, found in Staphylococcus aureus (strain bovine RF122 / ET3-1).